The primary structure comprises 350 residues: D-alanine--D-alanine ligase (350 aa).

The 202-residue stretch at 133 to 334 (NDIFELNKIP…VSEVFDNLIG (202 aa)) folds into the ATP-grasp domain. 161-216 (FEKTSKAVYVKPCNAGSSVGVMRAETEEELEKAIQNAFQYDRRILVEEEIIGPELQ) contacts ATP. Mg(2+) contacts are provided by aspartate 288, glutamate 300, and asparagine 302.

It belongs to the D-alanine--D-alanine ligase family. Requires Mg(2+) as cofactor. It depends on Mn(2+) as a cofactor.

Its subcellular location is the cytoplasm. It carries out the reaction 2 D-alanine + ATP = D-alanyl-D-alanine + ADP + phosphate + H(+). The protein operates within cell wall biogenesis; peptidoglycan biosynthesis. Cell wall formation. The protein is D-alanine--D-alanine ligase of Finegoldia magna (strain ATCC 29328 / DSM 20472 / WAL 2508) (Peptostreptococcus magnus).